The chain runs to 905 residues: MDFPTLSSYLHHHRPGEDILADLHTDPGLGLTAEAVAQRYEQYGRNELKFKPGKPAWLRFLLQFHQPLLYILLIAGTVKAFLGSWTNAWVIWGVTLVNAIIGYIQEAKAEGAIASLAKAVTTEATVLRDGQNLRIPSQDLVIGDIVSLASGDKVPADLRLLKVRNLQVDESALTGEAVPVEKAVELLPEETPLAERLNMAYAGSFVTFGQGTGVVVATANATEMGQISQSMEKQVSLMTPLTRKFAKFSHTLLYVIVTLAAFTFAVGWGRGGSPLEMFEAAVALAVSAIPEGLPAVVTVTLAIGVNRMAKRNAIIRKLPAVEALGSATVVCSDKTGTLTENQMTVQAVYAGGKHYEVSGGGYSPKGEFWQVMGEEVDNVLLDGLPPVLEECLLTGMLCNDSQLEHRGDDWAVVGDPTEGALLASAAKAGFSQAGLASQKPRLDSIPFESDYQYMATLHDGDGRTIYVKGSVESLLQRCESMLLDDGQMVSIDRGEIEENVEDMAQQGLRVLAFAKKTVEPHHHAIDHGDIETGLIFLGLQGMIDPPRPEAIAAVHACHDAGIEVKMITGDHISTAQAIAKRMGIAAEGDGIAFEGRQLATMGPAELAQAAEDSCVFARVAPAQKLQLVEALQEKGHIVAMTGDGVNDAPALKRADIGIAMGKGGTEVARESSDMLLTDDNFASIEAAVEEGRTVYQNLRKAIAFLLPVNGGESMTILISVLLALNLPILSLQVLWLNMINSITMTVPLAFEAKSPGIMQQAPRNPNEPLITKKLLHRILLVSLFNWILIFGMFEWVNRTYDDLALARTMAIQALVAARVIYLLSISQLGRSFLGYVTGKRQTITKASILLLGIAVAIALQIGFSQLPFMNVLFKTAPMDWQQWAICLLPMIPMVPVAILANRLDP.

The next 4 membrane-spanning stretches (helical) occupy residues 60 to 80 (FLLQ…TVKA), 81 to 101 (FLGS…NAII), 248 to 268 (FSHT…AVGW), and 283 to 303 (ALAV…TLAI). D333 (4-aspartylphosphate intermediate) is an active-site residue. Helical transmembrane passes span 716–736 (ILIS…VLWL), 774–794 (LLHR…GMFE), 809–829 (MAIQ…SQLG), 848–868 (ILLL…QLPF), and 880–900 (WQQW…AILA).

This sequence belongs to the cation transport ATPase (P-type) (TC 3.A.3) family. Type IIA subfamily.

It is found in the cell membrane. The enzyme catalyses ATP + H2O = ADP + phosphate + H(+). Functionally, could mediate calcium influx. The chain is Cation-transporting ATPase pma1 (pma1) from Synechocystis sp. (strain ATCC 27184 / PCC 6803 / Kazusa).